The chain runs to 176 residues: MDLPGPIHEILVLFGGFGLLLGGLGVVLLTNPIYSAFSLGLVLVCISLFYFLLNSYFVAVAQLLIYVGAINVLIIFAVMFVNGSEWSKDKNYWTIGDGFTLLLCITIPFSLMTTIPDTSWYGILWTTRSNQIVEQGLINNVQQIGIHLATDFYLPFELISLILLVSLIGAITMARQ.

Transmembrane regions (helical) follow at residues 10–30, 33–53, 60–80, 95–115, and 152–172; these read ILVLFGGFGLLLGGLGVVLLT, IYSAFSLGLVLVCISLFYFLL, VAQLLIYVGAINVLIIFAVMF, IGDGFTLLLCITIPFSLMTTI, and FYLPFELISLILLVSLIGAIT.

It belongs to the complex I subunit 6 family. NDH is composed of at least 16 different subunits, 5 of which are encoded in the nucleus.

It localises to the plastid. Its subcellular location is the chloroplast thylakoid membrane. The enzyme catalyses a plastoquinone + NADH + (n+1) H(+)(in) = a plastoquinol + NAD(+) + n H(+)(out). The catalysed reaction is a plastoquinone + NADPH + (n+1) H(+)(in) = a plastoquinol + NADP(+) + n H(+)(out). Its function is as follows. NDH shuttles electrons from NAD(P)H:plastoquinone, via FMN and iron-sulfur (Fe-S) centers, to quinones in the photosynthetic chain and possibly in a chloroplast respiratory chain. The immediate electron acceptor for the enzyme in this species is believed to be plastoquinone. Couples the redox reaction to proton translocation, and thus conserves the redox energy in a proton gradient. This Zea mays (Maize) protein is NAD(P)H-quinone oxidoreductase subunit 6, chloroplastic (ndhG).